The sequence spans 150 residues: MKLHTLRPAKGSVKTSKRIGRGTGSGRGGTSTKGHKGAKSRSGYSSKIGFEGGQMPLQRRLPKFGFKPLNKIEFKPINLDELLELIEKTGASVIDTALMNQNGLIGKNDKVKVLARGEVKSIKAEIIAHAFSASASEAITNAGGKVTLIG.

The disordered stretch occupies residues 1-51; it reads MKLHTLRPAKGSVKTSKRIGRGTGSGRGGTSTKGHKGAKSRSGYSSKIGFE. Over residues 21-31 the composition is skewed to gly residues; that stretch reads RGTGSGRGGTS.

This sequence belongs to the universal ribosomal protein uL15 family. As to quaternary structure, part of the 50S ribosomal subunit.

Its function is as follows. Binds to the 23S rRNA. This Cytophaga hutchinsonii (strain ATCC 33406 / DSM 1761 / CIP 103989 / NBRC 15051 / NCIMB 9469 / D465) protein is Large ribosomal subunit protein uL15.